Reading from the N-terminus, the 215-residue chain is Pyrrolidone-carboxylate peptidase (215 aa).

Active-site residues include Glu80, Cys143, and His167.

This sequence belongs to the peptidase C15 family. In terms of assembly, homotetramer.

The protein resides in the cytoplasm. It carries out the reaction Release of an N-terminal pyroglutamyl group from a polypeptide, the second amino acid generally not being Pro.. In terms of biological role, removes 5-oxoproline from various penultimate amino acid residues except L-proline. In Bacillus cereus (strain 03BB102), this protein is Pyrrolidone-carboxylate peptidase.